The following is a 1338-amino-acid chain: ABC-type transporter kk1G (1338 aa).

The interval Met-1–His-21 is disordered. Residues Ser-11–His-21 are compositionally biased toward basic and acidic residues. Transmembrane regions (helical) follow at residues Tyr-75–Met-95, Leu-130–Ile-150, His-203–Val-223, Leu-230–Phe-250, Thr-312–Ile-332, and Ile-340–Ile-360. Residues Leu-80–Lys-372 enclose the ABC transmembrane type-1 1 domain. In terms of domain architecture, ABC transporter 1 spans Ile-405–His-706. Gly-440–Ser-447 contacts ATP. 2 disordered regions span residues Glu-473–Gly-518 and Glu-715–Arg-747. Transmembrane regions (helical) follow at residues Val-777–Ala-797, Phe-816–Gly-836, Met-895–Trp-917, Leu-919–Leu-941, Ile-1003–Gly-1023, and Phe-1037–Phe-1057. Residues Val-777–Gln-1063 form the ABC transmembrane type-1 2 domain. The 238-residue stretch at Ile-1096–Ala-1333 folds into the ABC transporter 2 domain. An ATP-binding site is contributed by Gly-1130–Ser-1137.

This sequence belongs to the ABC transporter superfamily. ABCB family. Multidrug resistance exporter (TC 3.A.1.201) subfamily.

The protein resides in the cell membrane. It functions in the pathway secondary metabolite biosynthesis. Its function is as follows. ABC transporter; part of the gene cluster that mediates the biosynthesis of KK-1, a novel cyclic depsipeptide with 10 residues which is a promising active compound with high activity against many plant pathogens, especially Botrytis cinerea. Is probably directly involved in the secretion of KK-1 and thus confers self-tolerance against KK-1. The sequence is that of ABC-type transporter kk1G from Curvularia clavata.